We begin with the raw amino-acid sequence, 546 residues long: Putative serine/threonine-protein kinase L268 (546 aa).

The Cyclin N-terminal domain occupies 1-112 (MVCFSKYSGI…ILQTLDFHLV (112 aa)). Residues 260–544 (ITVVKNLGEG…QTLEEFNKFN (285 aa)) enclose the Protein kinase domain. ATP is bound by residues 266–274 (LGEGTYGTV) and lysine 287. Aspartate 389 acts as the Proton acceptor in catalysis.

Belongs to the protein kinase superfamily. Ser/Thr protein kinase family.

The catalysed reaction is L-seryl-[protein] + ATP = O-phospho-L-seryl-[protein] + ADP + H(+). It catalyses the reaction L-threonyl-[protein] + ATP = O-phospho-L-threonyl-[protein] + ADP + H(+). The chain is Putative serine/threonine-protein kinase L268 from Acanthamoeba polyphaga mimivirus (APMV).